Here is a 389-residue protein sequence, read N- to C-terminus: Succinate--CoA ligase [ADP-forming] subunit beta (389 aa).

The ATP-grasp domain maps to 9–244 (KQLFEHYGLP…LTQNDAREAE (236 aa)). ATP contacts are provided by residues Lys-46, 53–55 (GRG), Glu-99, Cys-102, and Glu-107. Mg(2+) is bound by residues Asn-199 and Asp-213. Residues Asn-264 and 321 to 323 (GIV) contribute to the substrate site.

This sequence belongs to the succinate/malate CoA ligase beta subunit family. As to quaternary structure, heterotetramer of two alpha and two beta subunits. Mg(2+) is required as a cofactor.

The enzyme catalyses succinate + ATP + CoA = succinyl-CoA + ADP + phosphate. The catalysed reaction is GTP + succinate + CoA = succinyl-CoA + GDP + phosphate. It participates in carbohydrate metabolism; tricarboxylic acid cycle; succinate from succinyl-CoA (ligase route): step 1/1. Succinyl-CoA synthetase functions in the citric acid cycle (TCA), coupling the hydrolysis of succinyl-CoA to the synthesis of either ATP or GTP and thus represents the only step of substrate-level phosphorylation in the TCA. The beta subunit provides nucleotide specificity of the enzyme and binds the substrate succinate, while the binding sites for coenzyme A and phosphate are found in the alpha subunit. The sequence is that of Succinate--CoA ligase [ADP-forming] subunit beta from Haemophilus influenzae (strain ATCC 51907 / DSM 11121 / KW20 / Rd).